A 541-amino-acid chain; its full sequence is Calcium/calmodulin-dependent protein kinase kinase (541 aa).

Residues 83 to 106 (AVQEDDEAGPHSSNNLAATMSPNL) form a disordered region. Over residues 93 to 106 (HSSNNLAATMSPNL) the composition is skewed to polar residues. The Protein kinase domain maps to 130–411 (YRLMEEIGQG…LHEVKVHTWV (282 aa)). ATP is bound by residues 136-144 (IGQGSYGIV) and lysine 159. The tract at residues 169–190 (NFACFRQPPPRRNKENAAPSVL) is RP domain. The Proton acceptor role is filled by aspartate 276. The segment at 437–442 (ENCVRV) is autoinhibitory domain. A calmodulin-binding region spans residues 440-465 (VRVIPRLDTLILVKAMGHRKRFGNPF). Residues 462–512 (GNPFRNKLSAQSSIRDRRKSSSVKDPTYVPPPNSPPATSNNNLNSTKVDRP) form a disordered region. Positions 497–507 (PATSNNNLNST) are enriched in low complexity.

This sequence belongs to the protein kinase superfamily. Ser/Thr protein kinase family. Mg(2+) is required as a cofactor. Expressed in head and tail neurons and vulval muscles.

The protein resides in the cytoplasm. The enzyme catalyses L-seryl-[protein] + ATP = O-phospho-L-seryl-[protein] + ADP + H(+). The catalysed reaction is L-threonyl-[protein] + ATP = O-phospho-L-threonyl-[protein] + ADP + H(+). Activated by Ca(2+)/calmodulin. Binding of calmodulin may relieve intrasteric autoinhibition. In terms of biological role, calcium/calmodulin-dependent protein kinase which phosphorylates cmk-1. Component of a calcium-triggered signaling cascade involved in CRE-mediated transcriptional activation, probably through cmk-1-mediated crh-1/CREB phosphorylation. Plays a role in salt-avoidance learning behavior via the phosphorylation of cmk-1. The sequence is that of Calcium/calmodulin-dependent protein kinase kinase from Caenorhabditis elegans.